The chain runs to 656 residues: Exoribonuclease 2 (656 aa).

The RNB domain maps to 190 to 518 (RSDLTKTPFF…LNHRLIKSVL (329 aa)). Residues 564-649 (KWRYKAEIFD…ESGQLIGKLA (86 aa)) form the S1 motif domain.

It belongs to the RNR ribonuclease family. RNase II subfamily.

Its subcellular location is the cytoplasm. It catalyses the reaction Exonucleolytic cleavage in the 3'- to 5'-direction to yield nucleoside 5'-phosphates.. In terms of biological role, involved in mRNA degradation. Hydrolyzes single-stranded polyribonucleotides processively in the 3' to 5' direction. In Psychromonas ingrahamii (strain DSM 17664 / CCUG 51855 / 37), this protein is Exoribonuclease 2.